The primary structure comprises 349 residues: Cytoplasmic tRNA 2-thiolation protein 2 (349 aa).

Belongs to the CTU2/NCS2 family.

It is found in the cytoplasm. It participates in tRNA modification; 5-methoxycarbonylmethyl-2-thiouridine-tRNA biosynthesis. In terms of biological role, plays a central role in 2-thiolation of mcm(5)S(2)U at tRNA wobble positions of tRNA(Lys), tRNA(Glu) and tRNA(Gln). May act by forming a heterodimer with tut-1/ctu-1 that ligates sulfur from thiocarboxylated urm-1 onto the uridine of tRNAs at wobble position. In Caenorhabditis briggsae, this protein is Cytoplasmic tRNA 2-thiolation protein 2.